Reading from the N-terminus, the 217-residue chain is Putative 8-oxo-dGTP diphosphatase 3 (217 aa).

The Nudix hydrolase domain occupies 30–164; the sequence is GRYGAAGLLL…PGFAASWQRL (135 aa). The segment at 67-92 is disordered; sequence LPGGARDSHETPEQTAVRESSEEAGL. 4 residues coordinate Mg(2+): glycine 70, glutamate 85, glutamate 88, and glutamate 89. A Nudix box motif is present at residues 70-91; the sequence is GARDSHETPEQTAVRESSEEAG.

This sequence belongs to the Nudix hydrolase family. It depends on Mg(2+) as a cofactor. Mn(2+) is required as a cofactor.

It catalyses the reaction 8-oxo-dGTP + H2O = 8-oxo-dGMP + diphosphate + H(+). Functionally, may be involved in the GO system responsible for removing an oxidatively damaged form of guanine (7,8-dihydro-8-oxoguanine, 8-oxo-dGTP) from DNA and the nucleotide pool. 8-oxo-dGTP is inserted opposite dA and dC residues of template DNA with almost equal efficiency thus leading to A.T to G.C transversions. MutT specifically degrades 8-oxo-dGTP to the monophosphate. The protein is Putative 8-oxo-dGTP diphosphatase 3 (mutT3) of Mycobacterium tuberculosis (strain CDC 1551 / Oshkosh).